A 695-amino-acid polypeptide reads, in one-letter code: UvrABC system protein B (695 aa).

A Helicase ATP-binding domain is found at 25 to 176 (KSILEGHRFQ…NQREVLRDLA (152 aa)). 38-45 (GATGTGKT) is an ATP binding site. The Beta-hairpin motif lies at 91–114 (YYDYYQPEAYVPSTDTYIAKSSSI). A Helicase C-terminal domain is found at 454–617 (LLGEIYLRLE…ITPKPIIKKN (164 aa)). The UVR domain maps to 652 to 687 (PELIGQLELKMKAAAKNLEFEEAAQLRDQIKKLRQR).

Belongs to the UvrB family. Forms a heterotetramer with UvrA during the search for lesions. Interacts with UvrC in an incision complex.

It is found in the cytoplasm. The UvrABC repair system catalyzes the recognition and processing of DNA lesions. A damage recognition complex composed of 2 UvrA and 2 UvrB subunits scans DNA for abnormalities. Upon binding of the UvrA(2)B(2) complex to a putative damaged site, the DNA wraps around one UvrB monomer. DNA wrap is dependent on ATP binding by UvrB and probably causes local melting of the DNA helix, facilitating insertion of UvrB beta-hairpin between the DNA strands. Then UvrB probes one DNA strand for the presence of a lesion. If a lesion is found the UvrA subunits dissociate and the UvrB-DNA preincision complex is formed. This complex is subsequently bound by UvrC and the second UvrB is released. If no lesion is found, the DNA wraps around the other UvrB subunit that will check the other stand for damage. The protein is UvrABC system protein B of Synechococcus sp. (strain JA-3-3Ab) (Cyanobacteria bacterium Yellowstone A-Prime).